Consider the following 226-residue polypeptide: UPF0758 protein PsycPRwf_0491 (226 aa).

The MPN domain occupies Ser102–Ala224. Residues His173, His175, and Asp186 each contribute to the Zn(2+) site. The JAMM motif motif lies at His173–Asp186.

Belongs to the UPF0758 family.

This Psychrobacter sp. (strain PRwf-1) protein is UPF0758 protein PsycPRwf_0491.